Consider the following 272-residue polypeptide: Type II secretion system protein C (272 aa).

Over 1–16 the chain is Cytoplasmic; the sequence is MNISKLPPLSPSVIRR. A helical transmembrane segment spans residues 17 to 35; it reads ILFYLLMLLFCQQLAMIFW. The Periplasmic segment spans residues 36 to 272; sequence RVGLPDNSPV…DIYMEFGGDE (237 aa).

This sequence belongs to the GSP C family.

It localises to the cell inner membrane. Functionally, involved in a type II secretion system (T2SS, formerly general secretion pathway, GSP) for the export of proteins. Required for the translocation of the multiple pectic enzymes. The protein is Type II secretion system protein C (outC) of Dickeya chrysanthemi (Pectobacterium chrysanthemi).